The primary structure comprises 235 residues: Probable flavin-dependent thymidylate synthase (235 aa).

Residues 1–229 (MKVQLIASTI…PNTYQDIPTE (229 aa)) form the ThyX domain. FAD is bound by residues Ser-70 and 93–95 (RHR). DUMP-binding positions include 90–93 (ELER), 103–105 (SQR), and Arg-168. Residues 93–103 (RHRHLSFSVVS) carry the ThyX motif motif. 184 to 186 (NHR) provides a ligand contact to FAD. Arg-195 provides a ligand contact to dUMP. The active-site Involved in ionization of N3 of dUMP, leading to its activation is the Arg-195.

This sequence belongs to the thymidylate synthase ThyX family. In terms of assembly, homotetramer. FAD is required as a cofactor.

It carries out the reaction dUMP + (6R)-5,10-methylene-5,6,7,8-tetrahydrofolate + NADPH + H(+) = dTMP + (6S)-5,6,7,8-tetrahydrofolate + NADP(+). The protein operates within pyrimidine metabolism; dTTP biosynthesis. Its function is as follows. Catalyzes the reductive methylation of 2'-deoxyuridine-5'-monophosphate (dUMP) to 2'-deoxythymidine-5'-monophosphate (dTMP) while utilizing 5,10-methylenetetrahydrofolate (mTHF) as the methyl donor, and NADPH and FADH(2) as the reductant. In Mycobacterium (Mycobacteriophage D29), this protein is Probable flavin-dependent thymidylate synthase (48).